The following is a 407-amino-acid chain: tRNA (guanine(9)-N1)-methyltransferase (407 aa).

Basic and acidic residues predominate over residues 1-19; sequence MDLDPAHKPSQAEETKEQG. 2 disordered regions span residues 1–105 and 220–256; these read MDLD…VRKR and ENMIEPLQRSLTEKSPWARDEKDPLPLPDPEPEPRPE. Residues 20–32 are compositionally biased toward low complexity; sequence NEQGQVEQNQAQQ. The segment covering 91 to 103 has biased composition (basic residues); that stretch reads LKRKDSRIARKVR. The region spanning 120–356 is the SAM-dependent MTase TRM10-type domain; it reads ANKQKPPSVN…SVIPKRKGGK (237 aa). S-adenosyl-L-methionine is bound by residues 263–264, G283, 287–291, C295, L309, and 321–323; these read LS, DKNRE, and TVL. D287 acts as the Proton acceptor in catalysis. The disordered stretch occupies residues 353-407; the sequence is KGGKLKEQQGASGETQETEEAEAEDPEEENEETKDPDAEASASKQNTPKVEVTSK. Residues 368-386 are compositionally biased toward acidic residues; sequence QETEEAEAEDPEEENEETK. Residues 394-407 are compositionally biased toward polar residues; the sequence is ASKQNTPKVEVTSK.

It belongs to the class IV-like SAM-binding methyltransferase superfamily. TRM10 family. As to quaternary structure, monomer.

It is found in the cytoplasm. Its subcellular location is the nucleus. It carries out the reaction guanosine(9) in tRNA + S-adenosyl-L-methionine = N(1)-methylguanosine(9) in tRNA + S-adenosyl-L-homocysteine + H(+). Functionally, S-adenosyl-L-methionine-dependent guanine N(1)-methyltransferase that catalyzes the formation of N(1)-methylguanine at position 9 (m1G9) in cytoplasmic tRNA. This chain is tRNA (guanine(9)-N1)-methyltransferase, found in Gibberella zeae (strain ATCC MYA-4620 / CBS 123657 / FGSC 9075 / NRRL 31084 / PH-1) (Wheat head blight fungus).